The chain runs to 506 residues: MLSQPSRERAFVLALGLVVSSSLAAAAPCDIYSSGGTPCVAAHSTTRALYSAYSGPLYQVKRGSDGATTNIAPRSAGGVANAAAQDTFCASMTCLITVIYDQSGRGNHLTQAPPGGFKGPEANGYDNLASAIGAPVTLNGQKAYGVFISPGTGYRNNAASGTAIGDAAEGMYAVLDGTHYNGGCCFDYGNAETSSLDTGNGHMEAIYFGTNTVWGSGSGSGPWIMADLENGLFSGSSPANNAGDPSVSYRFLTAAIKGGPNRWAIRGANAASGSLATYYSGARPNASGYNPMSKEGAIILGIGGDNSNGAQGTFYEGVMTSGYPSDATENAVQADIVAANYAVTSLTSGPALTVGSAISLRATTSCCTTRYLAHTGSTINTQVVSSASATTLKQQATWTVRTGLANSGCFSFESKDTPGSFIRHSNFALVLNGNDGTKQFKEDATFCPQAGLNGQGSSIRSWSFPTRYFRHYSNVLYAASNGGVHTFDAAGSFNDDVSWVISSGFA.

The signal sequence occupies residues 1–26 (MLSQPSRERAFVLALGLVVSSSLAAA). The segment at 27 to 343 (APCDIYSSGG…ADIVAANYAV (317 aa)) is catalytic. Intrachain disulfides connect Cys29–Cys39, Cys89–Cys94, and Cys184–Cys185. Residue Asp227 participates in substrate binding. The Nucleophile role is filled by Glu229. Asn230 provides a ligand contact to substrate. Asn285 is a glycosylation site (N-linked (GlcNAc...) asparagine). Gly304 is a binding site for substrate. Asp305 serves as the catalytic Proton donor. Positions 344–506 (TSLTSGPALT…VSWVISSGFA (163 aa)) are ABD. Cys409 and Cys447 form a disulfide bridge. The substrate site is built by His424, Asn426, Phe427, Asp443, His471, Leu476, and Asp496.

The protein belongs to the glycosyl hydrolase 54 family.

It is found in the secreted. The enzyme catalyses Hydrolysis of terminal non-reducing alpha-L-arabinofuranoside residues in alpha-L-arabinosides.. The protein operates within glycan metabolism; L-arabinan degradation. In terms of biological role, alpha-L-arabinofuranosidase involved in the degradation of arabinoxylan, a major component of plant hemicellulose. Able to hydrolyze 1,5-, 1,3- and 1,2-alpha-linkages not only in L-arabinofuranosyl oligosaccharides, but also in polysaccharides containing terminal non-reducing L-arabinofuranoses in side chains, like L-arabinan, arabinogalactan and arabinoxylan. This Aspergillus clavatus (strain ATCC 1007 / CBS 513.65 / DSM 816 / NCTC 3887 / NRRL 1 / QM 1276 / 107) protein is Probable alpha-L-arabinofuranosidase B (abfB).